A 151-amino-acid polypeptide reads, in one-letter code: Phosphopantetheine adenylyltransferase (151 aa).

Threonine 9 serves as a coordination point for substrate. ATP is bound by residues 9–10 (TF) and histidine 17. Substrate-binding residues include lysine 41, threonine 73, and arginine 87. ATP-binding positions include 88–90 (GIR), glutamate 98, and 122–128 (LTSISST).

Belongs to the bacterial CoaD family. As to quaternary structure, homohexamer. Mg(2+) serves as cofactor.

Its subcellular location is the cytoplasm. It carries out the reaction (R)-4'-phosphopantetheine + ATP + H(+) = 3'-dephospho-CoA + diphosphate. It participates in cofactor biosynthesis; coenzyme A biosynthesis; CoA from (R)-pantothenate: step 4/5. Reversibly transfers an adenylyl group from ATP to 4'-phosphopantetheine, yielding dephospho-CoA (dPCoA) and pyrophosphate. The sequence is that of Phosphopantetheine adenylyltransferase from Phocaeicola vulgatus (strain ATCC 8482 / DSM 1447 / JCM 5826 / CCUG 4940 / NBRC 14291 / NCTC 11154) (Bacteroides vulgatus).